The primary structure comprises 472 residues: Transcription factor TGAL1 (472 aa).

The disordered stretch occupies residues 136–190; sequence WGESTIADTSPRTDTSTDPDTDERNQMFEQGQLAAPTASDSSDRSKDKLDHKTLR. A compositionally biased stretch (low complexity) spans 143–153; the sequence is DTSPRTDTSTD. Residues 176 to 187 are compositionally biased toward basic and acidic residues; it reads SSDRSKDKLDHK. The bZIP domain occupies 185–229; sequence DHKTLRRLAQNREAARKSRLRKKAYIQNLESSRLKLTQIEQELQR. The tract at residues 187–207 is basic motif; it reads KTLRRLAQNREAARKSRLRKK. The segment at 213-227 is leucine-zipper; that stretch reads LESSRLKLTQIEQEL. The region spanning 252–469 is the DOG1 domain; the sequence is ALAFDMEYAR…RALSSLWLAR (218 aa).

The protein belongs to the bZIP family. Isoforms 1 and 2 interact with NPR2/NH2. Isoform 2 interacts with NPR1/NH1 and NPR3/NH3.

The protein resides in the nucleus. In terms of biological role, transcriptional regulator involved in defense response. In Oryza sativa subsp. japonica (Rice), this protein is Transcription factor TGAL1.